A 796-amino-acid chain; its full sequence is Inactive dipeptidyl peptidase 10 (796 aa).

Topologically, residues 1 to 34 are cytoplasmic; that stretch reads MNQTASVSHHIKCQPSKTIKELGSNSPPQRNWKG. Residues 1–56 are mediates effects on KCND2; it reads MNQTASVSHHIKCQPSKTIKELGSNSPPQRNWKGIAIALLVILVVCSLITMSVILL. Residues 35–55 traverse the membrane as a helical; Signal-anchor for type II membrane protein segment; sequence IAIALLVILVVCSLITMSVIL. The Extracellular portion of the chain corresponds to 56-796; that stretch reads LTPDELTNSS…VLPQEPEEDE (741 aa). 3 N-linked (GlcNAc...) asparagine glycosylation sites follow: Asn-90, Asn-111, and Asn-119. 2 positions are modified to phosphotyrosine: Tyr-138 and Tyr-143. Residues Asn-257, Asn-342, and Asn-748 are each glycosylated (N-linked (GlcNAc...) asparagine).

Belongs to the peptidase S9B family. DPPIV subfamily. In terms of assembly, may form oligomers. Interacts with KCND1. Interacts with KCND2. In terms of processing, N-glycosylation is important for cell surface expression, specially at Asn-257, which is crucial. As to expression, found in serum, T-cells and brain (at protein level). Expressed in brain, pancreas, spinal cord and adrenal glands.

It is found in the cell membrane. Functionally, promotes cell surface expression of the potassium channel KCND2. Modulates the activity and gating characteristics of the potassium channel KCND2. Has no dipeptidyl aminopeptidase activity. The polypeptide is Inactive dipeptidyl peptidase 10 (DPP10) (Homo sapiens (Human)).